A 283-amino-acid polypeptide reads, in one-letter code: MNEKIAVVTDSTTYLPDEVKEQLRINVVPLSVIIDGKSYREGEELSTADFYKKVKEAENFPTSSQPAPGEFIQLFEKLKEQGFDTVISIHLSSGISGTFQNAASAGELIDGLNVVAYDSELSCMAQGMFAVKAAEMALANEPLERIISELDKIKKAQDAYFMVDDLNNLQRGGRLNGAQALVGSLLQIKPILHFNDKQIVLFEKVRTQKKALKRIEDILEVAIKNKNAEKAYVIHGNDPEKGETWRKHLESKFPEVEFELSYFGPVIGTHLGEGALGLTWSIK.

The region spanning 5 to 282 is the DegV domain; it reads IAVVTDSTTY…EGALGLTWSI (278 aa). Hexadecanoate-binding residues include Ser-63 and Ser-96.

Functionally, may bind long-chain fatty acids, such as palmitate, and may play a role in lipid transport or fatty acid metabolism. This Listeria innocua serovar 6a (strain ATCC BAA-680 / CLIP 11262) protein is DegV domain-containing protein lin2658.